The chain runs to 190 residues: Ribose 1,5-bisphosphate phosphokinase PhnN (190 aa).

An ATP-binding site is contributed by glycine 19 to aspartate 26.

It belongs to the ribose 1,5-bisphosphokinase family.

The catalysed reaction is alpha-D-ribose 1,5-bisphosphate + ATP = 5-phospho-alpha-D-ribose 1-diphosphate + ADP. The protein operates within metabolic intermediate biosynthesis; 5-phospho-alpha-D-ribose 1-diphosphate biosynthesis; 5-phospho-alpha-D-ribose 1-diphosphate from D-ribose 5-phosphate (route II): step 3/3. Functionally, catalyzes the phosphorylation of ribose 1,5-bisphosphate to 5-phospho-D-ribosyl alpha-1-diphosphate (PRPP). This is Ribose 1,5-bisphosphate phosphokinase PhnN from Ruegeria sp. (strain TM1040) (Silicibacter sp.).